The sequence spans 483 residues: Glutamate--tRNA ligase (483 aa).

A 'HIGH' region motif is present at residues 11–21; it reads PSPTGLLHIGN. A 'KMSKS' region motif is present at residues 255 to 259; sequence KLSKR. ATP is bound at residue K258.

This sequence belongs to the class-I aminoacyl-tRNA synthetase family. Glutamate--tRNA ligase type 1 subfamily. As to quaternary structure, monomer.

The protein localises to the cytoplasm. The enzyme catalyses tRNA(Glu) + L-glutamate + ATP = L-glutamyl-tRNA(Glu) + AMP + diphosphate. Its function is as follows. Catalyzes the attachment of glutamate to tRNA(Glu) in a two-step reaction: glutamate is first activated by ATP to form Glu-AMP and then transferred to the acceptor end of tRNA(Glu). The sequence is that of Glutamate--tRNA ligase from Lactococcus lactis subsp. cremoris (strain MG1363).